The chain runs to 405 residues: Probable tRNA sulfurtransferase (405 aa).

In terms of domain architecture, THUMP spans 60-165 (EGVIERLRHV…QDAIYLTNQV (106 aa)). Residues 183–184 (ML), 208–209 (HF), Arg-265, Gly-287, and Gln-296 each bind ATP.

The protein belongs to the ThiI family.

The protein resides in the cytoplasm. The catalysed reaction is [ThiI sulfur-carrier protein]-S-sulfanyl-L-cysteine + a uridine in tRNA + 2 reduced [2Fe-2S]-[ferredoxin] + ATP + H(+) = [ThiI sulfur-carrier protein]-L-cysteine + a 4-thiouridine in tRNA + 2 oxidized [2Fe-2S]-[ferredoxin] + AMP + diphosphate. It carries out the reaction [ThiS sulfur-carrier protein]-C-terminal Gly-Gly-AMP + S-sulfanyl-L-cysteinyl-[cysteine desulfurase] + AH2 = [ThiS sulfur-carrier protein]-C-terminal-Gly-aminoethanethioate + L-cysteinyl-[cysteine desulfurase] + A + AMP + 2 H(+). The protein operates within cofactor biosynthesis; thiamine diphosphate biosynthesis. In terms of biological role, catalyzes the ATP-dependent transfer of a sulfur to tRNA to produce 4-thiouridine in position 8 of tRNAs, which functions as a near-UV photosensor. Also catalyzes the transfer of sulfur to the sulfur carrier protein ThiS, forming ThiS-thiocarboxylate. This is a step in the synthesis of thiazole, in the thiamine biosynthesis pathway. The sulfur is donated as persulfide by IscS. This chain is Probable tRNA sulfurtransferase, found in Latilactobacillus sakei subsp. sakei (strain 23K) (Lactobacillus sakei subsp. sakei).